Here is a 419-residue protein sequence, read N- to C-terminus: L-rhamnose isomerase (419 aa).

Residues His262, Asp294, and Asp296 each contribute to the Mn(2+) site.

It belongs to the rhamnose isomerase family. Homotetramer. The cofactor is Mn(2+).

The protein resides in the cytoplasm. It catalyses the reaction L-rhamnopyranose = L-rhamnulose. It functions in the pathway carbohydrate degradation; L-rhamnose degradation; glycerone phosphate from L-rhamnose: step 1/3. Its function is as follows. Catalyzes the interconversion of L-rhamnose and L-rhamnulose. The polypeptide is L-rhamnose isomerase (Escherichia coli O139:H28 (strain E24377A / ETEC)).